Here is a 544-residue protein sequence, read N- to C-terminus: Zinc finger and BTB domain-containing protein 7B (544 aa).

The 82-residue stretch at 34–115 (CDLTIRTQGL…AYTATLTTSS (82 aa)) folds into the BTB domain. At Ser-150 the chain carries Phosphoserine. Disordered stretches follow at residues 171-221 (TTAS…ARAN) and 244-314 (GRLG…EDPI). Positions 186–200 (PQVPLLPPPPPPPRP) are enriched in pro residues. The segment covering 201-210 (VARRSRKPRK) has biased composition (basic residues). 2 positions are modified to N6-acetyllysine; by EP300; alternate: Lys-210 and Lys-216. Glycyl lysine isopeptide (Lys-Gly) (interchain with G-Cter in ubiquitin); alternate cross-links involve residues Lys-210 and Lys-216. Positions 277–286 (FEGEEEEEEM) are enriched in acidic residues. Lys-339 carries the post-translational modification N6-acetyllysine; by EP300; alternate. Lys-339 is covalently cross-linked (Glycyl lysine isopeptide (Lys-Gly) (interchain with G-Cter in ubiquitin); alternate). The required for interaction with and acetylation by EP300 stretch occupies residues 348 to 404 (MPQECPVCHKIIHGAGKLPRHMRTHTGEKPFACEVCGVRFTRNDKLKIHMRKHTGER). Residues 350 to 372 (QECPVCHKIIHGAGKLPRHMRTH) form a C2H2-type 1 zinc finger. A Phosphothreonine modification is found at Thr-373. C2H2-type zinc fingers lie at residues 378–400 (FACEVCGVRFTRNDKLKIHMRKH) and 406–428 (YSCPHCPARFLHSYDLKNHMHLH). The C2H2-type 4; atypical zinc-finger motif lies at 434–458 (YECHLCHKAFAKEDHLQRHLKGQNC). 2 disordered regions span residues 465-493 (RRRKDDVAAPHYPPPSTTTSSPAGLDLSN) and 507-544 (WEQSATTGPPVTTQGPPEEEEEEGTPTTPQAEGAMESS). 2 stretches are compositionally biased toward low complexity: residues 511 to 522 (ATTGPPVTTQGP) and 531 to 544 (TPTTPQAEGAMESS).

As to quaternary structure, homodimerizes. Interacts with NCL, NEDD4 and YBX1. Interacts with HNRNPU (via RNA-binding RGG-box region); the interaction facilitates the recruitment of long non-coding RNA Blnc1 by ZBTB7B. Interacts with HDAC4 and HDAC5; the interaction allows the recruitment of HDAC4 and HDAC5 on CD8 loci for deacetylation and possible inhibition of CD8 genes expression. Acetylated directly and specifically by EP300. EP300-mediated acetylation of Lys-210, Lys-216 and Lys-339 stabilizes the protein by antagonizing ubiquitin conjugation. Post-translationally, ubiquitinated, leading to proteasomal degradation. Competes with acetylation on Lys-210, Lys-216 and Lys-339. In terms of tissue distribution, widely expressed, with a higher level in skin. Expressed in thymus. Restricted to CD4 cells (mature single positive CD4(+) and intermediate CD4(+)CD8(+) cells). Expressed in the luminal epithelial cells in the mammary glands where is up-regulated at late pregnancy and lactation. Expression is enriched in brown fat.

It localises to the nucleus. Functionally, transcription regulator that acts as a key regulator of lineage commitment of immature T-cell precursors. Exerts distinct biological functions in the mammary epithelial cells and T cells in a tissue-specific manner. Necessary and sufficient for commitment of CD4 lineage, while its absence causes CD8 commitment. Development of immature T-cell precursors (thymocytes) to either the CD4 helper or CD8 killer T-cell lineages correlates precisely with their T-cell receptor specificity for major histocompatibility complex class II or class I molecules, respectively. Cross-antagonism between ZBTB7B and CBF complexes are determinative to CD4 versus CD8 cell fate decision. Suppresses RUNX3 expression and imposes CD4+ lineage fate by inducing the SOCS suppressors of cytokine signaling. induces, as a transcriptional activator, SOCS genes expression which represses RUNX3 expression and promotes the CD4+ lineage fate. During CD4 lineage commitment, associates with multiple sites at the CD8 locus, acting as a negative regulator of the CD8 promoter and enhancers by epigenetic silencing through the recruitment of class II histone deacetylases, such as HDAC4 and HDAC5, to these loci. Regulates the development of IL17-producing CD1d-restricted naural killer (NK) T cells. Also functions as an important metabolic regulator in the lactating mammary glands. Critical feed-forward regulator of insulin signaling in mammary gland lactation, directly regulates expression of insulin receptor substrate-1 (IRS-1) and insulin-induced Akt-mTOR-SREBP signaling. Transcriptional repressor of the collagen COL1A1 and COL1A2 genes. May also function as a repressor of fibronectin and possibly other extracellular matrix genes. Potent driver of brown fat development, thermogenesis and cold-induced beige fat formation. Recruits the brown fat lncRNA 1 (Blnc1):HNRNPU ribonucleoprotein complex to activate thermogenic gene expression in brown and beige adipocytes. In Mus musculus (Mouse), this protein is Zinc finger and BTB domain-containing protein 7B.